We begin with the raw amino-acid sequence, 644 residues long: Keratin, type II cytoskeletal 1 (644 aa).

Residues 2 to 179 (SRQFSSRSGY…DPEIQKVKSR (178 aa)) are head. An Omega-N-methylarginine modification is found at arginine 12. 2 positions are modified to phosphoserine: serine 18 and serine 21. The segment covering 22–38 (AGIINYQRRTTSSSTRR) has biased composition (low complexity). The disordered stretch occupies residues 22–47 (AGIINYQRRTTSSSTRRSGGGGGRFS). At arginine 45 the chain carries Omega-N-methylarginine. Serine 66 carries the post-translational modification Phosphoserine. An Omega-N-methylarginine modification is found at arginine 82. The coil 1A stretch occupies residues 180–215 (EREQIKSLNNQFASFIDKVRFLEQQNQVLQTKWELL). Residues 180–493 (EREQIKSLNN…TLLEGEESRM (314 aa)) form the IF rod domain. The segment at 216–234 (QQVDTSTRTHNLEPYFESF) is linker 1. Residues 235–326 (INNLRRRVDQ…ALYQAELSQM (92 aa)) are coil 1B. Residue lysine 276 is modified to N6,N6-dimethyllysine. The linker 12 stretch occupies residues 327–350 (QTQISETNVILSMDNNRSLDLDSI). Phosphoserine is present on serine 344. The segment at 351 to 489 (IAEVKAQYED…ATYRTLLEGE (139 aa)) is coil 2. 2 disordered regions span residues 489 to 523 (EESRMSGECAPNVSVSVSTSHTTISGGGSRGGGGG) and 568 to 644 (SGGG…GVTR). The tract at residues 490–644 (ESRMSGECAP…VSTTYSGVTR (155 aa)) is tail. Over residues 501 to 511 (VSVSVSTSHTT) the composition is skewed to low complexity. 2 stretches are compositionally biased toward gly residues: residues 513-523 (SGGGSRGGGGG) and 568-620 (SGGG…GSSS). Residues arginine 518 and arginine 588 each carry the omega-N-methylarginine modification. Over residues 621–631 (GGVKSSGGSSS) the composition is skewed to low complexity. Positions 632-644 (VKFVSTTYSGVTR) are enriched in polar residues.

The protein belongs to the intermediate filament family. As to quaternary structure, heterotetramer of two type I and two type II keratins. Heterodimer with KRT10. Two heterodimers of KRT1 and KRT10 form a heterotetramer. Forms a heterodimer with KRT14; the interaction is more abundant in the absence of KRT5. Interacts with PLEC isoform 1C, when in a heterodimer with KRT10. Interacts with ITGB1 in the presence of RACK1 and SRC, and with RACK1. Interacts with C1QBP; the association represents a cell surface kininogen receptor. Interacts with EPPK1; interaction is dependent of higher-order structure of intermediate filament. In terms of processing, undergoes deimination of some arginine residues (citrullination). In terms of tissue distribution, the source of this protein is neonatal foreskin. The 67-kDa type II keratins are expressed in terminally differentiating epidermis.

It localises to the cell membrane. Its subcellular location is the cytoplasm. Functionally, may regulate the activity of kinases such as PKC and SRC via binding to integrin beta-1 (ITB1) and the receptor of activated protein C kinase 1 (RACK1). In complex with C1QBP is a high affinity receptor for kininogen-1/HMWK. The protein is Keratin, type II cytoskeletal 1 (KRT1) of Homo sapiens (Human).